The chain runs to 194 residues: Adenylate kinase isoenzyme 1 (194 aa).

19–24 (GSGKGT) provides a ligand contact to ATP. Residues 39–68 (STGDLLRAEVSSGSERGKKLQAIMEKGELV) form an NMP region. AMP-binding positions include T40, R45, 66 to 68 (ELV), 95 to 98 (GYPR), and Q102. An LID region spans residues 132–142 (KRGETSGRVDD). R133 serves as a coordination point for ATP. The AMP site is built by R139 and R150. G178 contacts ATP.

Belongs to the adenylate kinase family. AK1 subfamily. As to quaternary structure, monomer. Mg(2+) serves as cofactor. Skeletal muscle.

The protein localises to the cytoplasm. It carries out the reaction a ribonucleoside 5'-phosphate + ATP = a ribonucleoside 5'-diphosphate + ADP. The catalysed reaction is AMP + ATP = 2 ADP. The enzyme catalyses dAMP + ATP = dADP + ADP. It catalyses the reaction dATP + AMP = dADP + ADP. It carries out the reaction dAMP + dATP = 2 dADP. The catalysed reaction is a 2'-deoxyribonucleoside 5'-diphosphate + ATP = a 2'-deoxyribonucleoside 5'-triphosphate + ADP. The enzyme catalyses a ribonucleoside 5'-diphosphate + ATP = a ribonucleoside 5'-triphosphate + ADP. It catalyses the reaction CDP + GTP = CTP + GDP. It carries out the reaction GDP + ATP = GTP + ADP. The catalysed reaction is UDP + ATP = UTP + ADP. The enzyme catalyses GTP + UDP = UTP + GDP. It catalyses the reaction dTDP + GTP = dTTP + GDP. It carries out the reaction dCDP + GTP = dCTP + GDP. The catalysed reaction is dGDP + ATP = dGTP + ADP. The enzyme catalyses dADP + GTP = dATP + GDP. It catalyses the reaction thiamine diphosphate + ADP = thiamine triphosphate + AMP. Catalyzes the reversible transfer of the terminal phosphate group between ATP and AMP. Also displays broad nucleoside diphosphate kinase activity. Plays an important role in cellular energy homeostasis and in adenine nucleotide metabolism. Also catalyzes at a very low rate the synthesis of thiamine triphosphate (ThTP) from thiamine diphosphate (ThDP) and ADP. The sequence is that of Adenylate kinase isoenzyme 1 from Gallus gallus (Chicken).